The following is a 642-amino-acid chain: MIPNGYLMFEDENFIESSVAKLNALRKSGQFCDVRLQVCGHEMLAHRAVLACCSPYLFEIFNSDSDPHGISHVKFDDLNPEAVEVLLNYAYTAQLKADKELVKDVYSAAKKLKMDRVKQVCGDYLLSRMDVTSCISYRNFASCMGDSRLLNKVDAYIQEHLLQISEEEEFLKLPRLKLEVMLEDNVCLPSNGKLYTKVINWVQRSIWENGDSLEELMEEVQTLYYSADHKLLDGNLLDGQAEVFGSDDDHIQFVQKKPPRENGHKQISSSSTGCLSSPNATVQSPKHEWKIVASEKTSNNTYLCLAVLDGIFCVIFLHGRNSPQSSPTSTPKLSKSLSFEMQQDELIEKPMSPMQYARSGLGTAEMNGKLIAAGGYNREECLRTVECYNPHTDHWSFLAPMRTPRARFQMAVLMGQLYVVGGSNGHSDDLSCGEMYDSNIDDWIPVPELRTNRCNAGVCALNGKLYIVGGSDPYGQKGLKNCDVFDPVTKLWTSCAPLNIRRHQSAVCELGGYLYIIGGAESWNCLNTVERYNPENNTWTLIAPMNVARRGAGVAVLNGKLFVCGGFDGSHAISCVEMYDPTRNEWKMMGNMTSPRSNAGIATVGNTIYAVGGFDGNEFLNTVEVYNLESNEWSPYTKIFQF.

A BTB domain is found at 1–131 (MIPNGYLMFE…GDYLLSRMDV (131 aa)). The region spanning 132-350 (TSCISYRNFA…MQQDELIEKP (219 aa)) is the BACK domain. The interval 164–368 (ISEEEEFLKL…SGLGTAEMNG (205 aa)) is sufficient for AHR interaction and signaling. Residues Ser246, Ser277, Ser322, Ser336, and Ser338 each carry the phosphoserine modification. Positions 257–281 (KPPRENGHKQISSSSTGCLSSPNAT) are disordered. The segment covering 265–281 (KQISSSSTGCLSSPNAT) has biased composition (polar residues). Kelch repeat units lie at residues 384–421 (TVECYNPHTDHWSFLAPMRTPRARFQMAVLMGQLYVVG), 432–469 (CGEMYDSNIDDWIPVPELRTNRCNAGVCALNGKLYIVG), 481–518 (NCDVFDPVTKLWTSCAPLNIRRHQSAVCELGGYLYIIG), 527–565 (NTVERYNPENNTWTLIAPMNVARRGAGVAVLNGKLFVCG), 575–612 (CVEMYDPTRNEWKMMGNMTSPRSNAGIATVGNTIYAVG), and 622–642 (TVEVYNLESNEWSPYTKIFQF).

This sequence belongs to the BTB-kelch protein family. Homodimer; through the BTB domain. Interacts with AHR/Aryl hydrocarbon receptor. Interacts (via BACK domain) with pre-mRNA-binding protein HNRNPK; the interaction is direct. Interacts (via BACK domain) with splicing factor PTBP1; the interaction is direct. Interacts (via Kelch repeats) with RNA polymerase POLR2A (via C-terminal domain). Interacts (via BACK domain) with splicing factor SNRPA; the interaction is indirect. Interacts (via Kelch repeats) with splicing factor SART1. Interacts (via BACK domain) with ALYREF; the interaction is indirect and likely plays a role in mRNA nuclear export. Interacts (via Kelch repeats) with KLHL20 (via Kelch repeats); this interaction blocks the assembly of Cul3-KLHL20 complex. As to quaternary structure, (Microbial infection) Interacts (via BACK domain) with influenza A virus non-structural protein 1 (NS1); the interaction is direct and bridges the interaction between NS1 and HNRNPK.

It is found in the cytoplasm. The protein localises to the cytoskeleton. The protein resides in the nucleus. Its subcellular location is the nucleoplasm. Functionally, involved in many cell functions, including pre-mRNA splicing, the aryl hydrocarbon receptor (AHR) pathway, F-actin organization and protein ubiquitination. Plays a role in the dynamic organization of the actin skeleton as a stabilizer of actin filaments by association with F-actin through Kelch repeats. Protects cells from cell death induced by actin destabilization. Functions as modifier of the AHR/Aryl hydrocarbon receptor pathway increasing the concentration of AHR available to activate transcription. In addition, functions as a negative regulator of BCR(KLHL20) E3 ubiquitin ligase complex to prevent ubiquitin-mediated proteolysis of PML and DAPK1, two tumor suppressors. Inhibits pre-mRNA splicing (in vitro). May play a role in mRNA nuclear export. (Microbial infection) Involved in the alternative splicing of influenza A virus M1 mRNA through interaction with HNRNPK, thereby facilitating the generation of viral M2 protein. The BTB and Kelch domains are required for splicing activity. Promotes export of viral M mRNA and RNP via its interaction with mRNA export factor ALYREF. The sequence is that of Influenza virus NS1A-binding protein from Homo sapiens (Human).